The sequence spans 30 residues: U10-ctenitoxin-Co1b (30 aa).

Disulfide bonds link Cys2/Cys17 and Cys9/Cys22.

In terms of tissue distribution, expressed by the venom gland.

It is found in the secreted. Antagonist of L-type calcium channels (Cav1/CACNA1). The sequence is that of U10-ctenitoxin-Co1b from Ctenus ornatus (Brazilian spider).